Here is a 578-residue protein sequence, read N- to C-terminus: GPI-anchor transamidase component PIGT (578 aa).

Positions 1–21 (MAAAMPLALLVLLLLGPGGWC) are cleaved as a signal peptide. The Lumenal portion of the chain corresponds to 22–525 (LAEPPRDSLR…NLPTPDFSMP (504 aa)). Asn-164 carries an N-linked (GlcNAc...) asparagine glycan. 2 cysteine pairs are disulfide-bonded: Cys-195/Cys-272 and Cys-226/Cys-231. Residues Asn-291 and Asn-327 are each glycosylated (N-linked (GlcNAc...) asparagine). 4 residues coordinate a 2-acyl-6-[6-phosphoethanolamine-alpha-D-mannosyl-(1-&gt;2)-6-phosphoethanolamine-alpha-D-mannosyl-(1-&gt;6)-2-phosphoethanolamine-alpha-D-mannosyl-(1-&gt;4)-alpha-D-glucosaminyl]-1-(1-radyl,2-acyl-sn-glycero-3-phospho)-1D-myo-inositol: Asn-461, Asp-521, Ser-523, and Asn-527. A helical transmembrane segment spans residues 526–548 (YNVICLTCTVVAVCYGSFYNLLT). Topologically, residues 549 to 578 (RTFHIEEPRTGGLAKRLANLIRRARGVPPL) are cytoplasmic.

This sequence belongs to the PIGT family. As to quaternary structure, heteropentamer. Part of the GPI-anchor transamidase complex, consisting of PIGK, PIGT, PIGS, PIGU and GAA1. The disulfide bond between PIGK/GPI8 and PIGT is important for normal enzyme activity.

The protein resides in the endoplasmic reticulum membrane. It participates in glycolipid biosynthesis; glycosylphosphatidylinositol-anchor biosynthesis. In terms of biological role, component of the glycosylphosphatidylinositol-anchor (GPI-anchor) transamidase (GPI-T) complex that catalyzes the formation of the linkage between a proprotein and a GPI-anchor and participates in GPI anchored protein biosynthesis. May play a crucial role in GPI-T complex assembly in the luminal layer. Binds GPI-anchor. This is GPI-anchor transamidase component PIGT from Homo sapiens (Human).